The sequence spans 520 residues: Lysine--tRNA ligase (520 aa).

Positions methionine 1–alanine 21 are disordered. The span at proline 12 to alanine 21 shows a compositional bias: low complexity. The Mg(2+) site is built by glutamate 430 and glutamate 437.

The protein belongs to the class-II aminoacyl-tRNA synthetase family. In terms of assembly, homodimer. Mg(2+) is required as a cofactor.

The protein localises to the cytoplasm. The enzyme catalyses tRNA(Lys) + L-lysine + ATP = L-lysyl-tRNA(Lys) + AMP + diphosphate. This chain is Lysine--tRNA ligase, found in Variovorax paradoxus (strain S110).